The following is a 406-amino-acid chain: Phosphopentomutase (406 aa).

Positions 10, 305, 310, 346, 347, and 358 each coordinate Mn(2+).

The protein belongs to the phosphopentomutase family. It depends on Mn(2+) as a cofactor.

It is found in the cytoplasm. It carries out the reaction 2-deoxy-alpha-D-ribose 1-phosphate = 2-deoxy-D-ribose 5-phosphate. The enzyme catalyses alpha-D-ribose 1-phosphate = D-ribose 5-phosphate. Its pathway is carbohydrate degradation; 2-deoxy-D-ribose 1-phosphate degradation; D-glyceraldehyde 3-phosphate and acetaldehyde from 2-deoxy-alpha-D-ribose 1-phosphate: step 1/2. Its function is as follows. Isomerase that catalyzes the conversion of deoxy-ribose 1-phosphate (dRib-1-P) and ribose 1-phosphate (Rib-1-P) to deoxy-ribose 5-phosphate (dRib-5-P) and ribose 5-phosphate (Rib-5-P), respectively. The protein is Phosphopentomutase of Aliivibrio salmonicida (strain LFI1238) (Vibrio salmonicida (strain LFI1238)).